We begin with the raw amino-acid sequence, 263 residues long: MFNTAVKILYRSLIELTNHRLSSYLIKGFCESKISKPVIPLFSKHFRLNWDDVDGTAADYGSLSELFIRQINLERRPVSKEAHAVVSPVDGVVQTVGIINPNQTFTVKGKDYSFAELTGCKSADHQYNGGYFVVLYLSPRHYHRFHSPISCRYQKLAELGNRSYPVNQLGLKYGKDVLSKNYRFVYELNSGSRNVLMIPVGAMNINSIVQTNTRTELEIGEELGYFSFGSTVILVFEKDAFQPSAHLAEGQEVQVGELIGYEE.

Residues Asp-90, His-146, and Ser-230 each act as charge relay system; for autoendoproteolytic cleavage activity in the active site. Ser-230 (schiff-base intermediate with substrate; via pyruvic acid; for decarboxylase activity) is an active-site residue. Pyruvic acid (Ser); by autocatalysis is present on Ser-230.

Belongs to the phosphatidylserine decarboxylase family. PSD-B subfamily. Prokaryotic type I sub-subfamily. As to quaternary structure, heterodimer of a large membrane-associated beta subunit and a small pyruvoyl-containing alpha subunit. The cofactor is pyruvate. In terms of processing, is synthesized initially as an inactive proenzyme. Formation of the active enzyme involves a self-maturation process in which the active site pyruvoyl group is generated from an internal serine residue via an autocatalytic post-translational modification. Two non-identical subunits are generated from the proenzyme in this reaction, and the pyruvate is formed at the N-terminus of the alpha chain, which is derived from the carboxyl end of the proenzyme. The autoendoproteolytic cleavage occurs by a canonical serine protease mechanism, in which the side chain hydroxyl group of the serine supplies its oxygen atom to form the C-terminus of the beta chain, while the remainder of the serine residue undergoes an oxidative deamination to produce ammonia and the pyruvoyl prosthetic group on the alpha chain. During this reaction, the Ser that is part of the protease active site of the proenzyme becomes the pyruvoyl prosthetic group, which constitutes an essential element of the active site of the mature decarboxylase.

The protein resides in the cell membrane. It carries out the reaction a 1,2-diacyl-sn-glycero-3-phospho-L-serine + H(+) = a 1,2-diacyl-sn-glycero-3-phosphoethanolamine + CO2. Its pathway is phospholipid metabolism; phosphatidylethanolamine biosynthesis; phosphatidylethanolamine from CDP-diacylglycerol: step 2/2. Catalyzes the formation of phosphatidylethanolamine (PtdEtn) from phosphatidylserine (PtdSer). This chain is Phosphatidylserine decarboxylase proenzyme, found in Bacillus subtilis (strain 168).